The sequence spans 98 residues: Integration host factor subunit alpha (98 aa).

Residues 49–71 form a disordered region; the sequence is FGNFDLRDKNQRPGRNPKTGEDI.

Belongs to the bacterial histone-like protein family. As to quaternary structure, heterodimer of an alpha and a beta chain.

Functionally, this protein is one of the two subunits of integration host factor, a specific DNA-binding protein that functions in genetic recombination as well as in transcriptional and translational control. The chain is Integration host factor subunit alpha from Shewanella halifaxensis (strain HAW-EB4).